A 95-amino-acid polypeptide reads, in one-letter code: F(1)-ATPase inhibitor IF(1), mitochondrial (95 aa).

Residues 1–25 constitute a mitochondrion transit peptide; the sequence is MLRTTVSKLARPTVSRAFATTSRAL. 2 disordered regions span residues 20 to 48 and 76 to 95; these read TTSR…REKA and LKTL…GERN.

This sequence belongs to the ATPase inhibitor family. As to quaternary structure, associates with the mitochondrial small ribosomal subunit (mt-SSU). IF(1) coiled-coil forms a helical bundle with the C-terminal extension of uS17m and also binds to mS27 in the mtSSU tail. Since the C-terminal extension of uS17m stabilizing the IF(1) on the mt-SSU is specific to N.crassa, IF(1) binding might also be specific.

The protein localises to the mitochondrion. Its function is as follows. Endogenous F(1)F(0)-ATPase inhibitor limiting ATP depletion when the mitochondrial membrane potential falls below a threshold and the F(1)F(0)-ATP synthase starts hydrolyzing ATP to pump protons out of the mitochondrial matrix. Required to avoid the consumption of cellular ATP when the F(1)F(0)-ATP synthase enzyme acts as an ATP hydrolase. Functions through inserting its N-terminal part into the catalytically active F1-ATPase, thereby blocking its rotational movement and subsequently the ATP hydrolase activity. The polypeptide is F(1)-ATPase inhibitor IF(1), mitochondrial (inh1) (Neurospora crassa (strain ATCC 24698 / 74-OR23-1A / CBS 708.71 / DSM 1257 / FGSC 987)).